A 410-amino-acid polypeptide reads, in one-letter code: Metacaspase-1 (410 aa).

The interval 1–94 is disordered; the sequence is MFPGSGRQTY…RQSGAMNDVS (94 aa). Composition is skewed to low complexity over residues 21-47 and 55-64; these read APQY…YNGP and NYNYGHYGPP. Residues 65 to 75 show a composition bias toward gly residues; sequence QGQGQGYGQGG. Over residues 80–94 the composition is skewed to polar residues; it reads MYNNNRQSGAMNDVS. Active-site residues include His-200 and Cys-256.

The protein belongs to the peptidase C14B family.

Involved in cell death (apoptosis). This Meyerozyma guilliermondii (strain ATCC 6260 / CBS 566 / DSM 6381 / JCM 1539 / NBRC 10279 / NRRL Y-324) (Yeast) protein is Metacaspase-1 (MCA1).